Reading from the N-terminus, the 673-residue chain is Leucine zipper putative tumor suppressor 3 (673 aa).

Disordered stretches follow at residues M1–P157, F172–A239, and I251–P317. Residues S79 to G92 are compositionally biased toward basic and acidic residues. Residues H173–T186 are compositionally biased toward polar residues. Residues G215–S235 are compositionally biased toward low complexity. Residues S258–G269 are compositionally biased toward gly residues. The segment covering G274–P294 has biased composition (low complexity). Residues G295–L307 are compositionally biased toward gly residues. S316 and S318 each carry phosphoserine. Coiled-coil stretches lie at residues P317 to D496 and R571 to E639. Positions R635–I673 are disordered. Residues H653–I673 are compositionally biased toward basic and acidic residues.

Belongs to the LZTS3 family. In terms of assembly, interacts (via C-terminus) with SHANK3 (via PDZ domain). Interacts (via coiled coil) with SIPA1L1. Can form homooligomers.

The protein localises to the synapse. It localises to the postsynaptic density. The protein resides in the cell projection. It is found in the dendritic spine. Its subcellular location is the dendrite. The protein localises to the cytoplasm. It localises to the cytoskeleton. May be involved in promoting the maturation of dendritic spines, probably via regulating SIPA1L1 levels at the postsynaptic density of synapses. This is Leucine zipper putative tumor suppressor 3 from Homo sapiens (Human).